The following is a 750-amino-acid chain: MMRQYELVERVQRYKPDVNEALLNKAYVYAMQKHGSQKRASGDPYFSHPLEVAAILTDMHLDEATIAIALLHDTIEDTTATRQEIDQLFGPEIGKLVEGLTKLKKLDLVSKKAVQAENLRKLLLAISEDVRVLLVKLADRLHNMRTLGVMREDKRLRIAEETMDIYAPLAGRMGMQDMREELEELAFRYINPDAWRAVTDRLAELLEKNRGLLQKIETDLSEIFEKNGIKASVKSRQKKPWSVFRKMETKGLSFEQLSDIFGFRVMVDTVQDCYRALGLIHTTWSMVPGRFKDYISTPKQNDYRSIHTTIIGPSRQRIELQIRTREMDEIAEFGVAAHSIYKDRGSANNPHKISTETNAYAWLRQTIEQLSEGDNPEEFLEHTKLELFQDQVFCFTPKGRLIALPRGATPIDFAYAVHTDIGDSCVGAKVNGRIMPLMTELKNGDEVDIIRSKAQVPPAAWESLVATGKARAAIRRATRSAVRKQYSGLGMRILERAFERAGKPFSKDILKPGLPRLARKDVEDVLAAVGRGELPSADVVKAVYPDYQDTRVTTQNNPAKAGEKGWFNIQNAAGMIFKVPEGGEGAAAKVDPAATTPKPGKRALPIRGTNPDLPVRFAPEGAVPGDRIVGILQPGAGITIYPIQSPALTAYDDQPERWIDVRWDIDDQMSERFPARISVSAINSPGSLAEIAQIAAANDANIHNLSMARTAPDFTEMIIDVEVWDLKHLNRIISQLKESASVSSAKRVNG.

The HD domain occupies 45–144; that stretch reads YFSHPLEVAA…VKLADRLHNM (100 aa). The 62-residue stretch at 390–451 folds into the TGS domain; sequence DQVFCFTPKG…KNGDEVDIIR (62 aa). The segment at 587-613 is disordered; the sequence is AAKVDPAATTPKPGKRALPIRGTNPDL. The ACT domain occupies 676–750; sequence RISVSAINSP…SVSSAKRVNG (75 aa).

Belongs to the RelA/SpoT family.

The catalysed reaction is GTP + ATP = guanosine 3'-diphosphate 5'-triphosphate + AMP. Its function is as follows. Functions as a (p)ppGpp synthase. In eubacteria ppGpp (guanosine 3'-diphosphate 5'-diphosphate) is a mediator of the stringent response that coordinates a variety of cellular activities in response to changes in nutritional abundance. Plays a role in adaptation of Brucella to its intracellular host environment. The protein is GTP pyrophosphokinase rsh (rsh) of Brucella abortus (strain 2308).